A 280-amino-acid chain; its full sequence is 2,3,4,5-tetrahydropyridine-2,6-dicarboxylate N-succinyltransferase (280 aa).

It belongs to the transferase hexapeptide repeat family.

It localises to the cytoplasm. The enzyme catalyses (S)-2,3,4,5-tetrahydrodipicolinate + succinyl-CoA + H2O = (S)-2-succinylamino-6-oxoheptanedioate + CoA. Its pathway is amino-acid biosynthesis; L-lysine biosynthesis via DAP pathway; LL-2,6-diaminopimelate from (S)-tetrahydrodipicolinate (succinylase route): step 1/3. This Methylorubrum extorquens (strain PA1) (Methylobacterium extorquens) protein is 2,3,4,5-tetrahydropyridine-2,6-dicarboxylate N-succinyltransferase.